We begin with the raw amino-acid sequence, 1149 residues long: Transforming acidic coiled-coil-containing protein 2 (1149 aa).

Disordered regions lie at residues 1–73 (MGNE…GSNQ), 91–227 (SASP…ASSG), and 247–430 (PCSA…VPLT). Polar residues predominate over residues 13-35 (TSSVQSPRSLQPPGKSQSLQKQQ). Residues 91–106 (SASPSAARASPAPLAP) show a composition bias toward low complexity. Residue Ser100 is modified to Phosphoserine. Residues 155–180 (KAPPAPPPPPPEVTPEPEVIDPPAPE) show a composition bias toward pro residues. Position 265 is a phosphoserine (Ser265). Polar residues-rich tracts occupy residues 267-284 (ESVP…SLQA) and 300-317 (TLTT…SSTL). The segment covering 318–334 (KRTKKTRPPSLKKKQAT) has biased composition (basic residues). A Phosphoserine modification is found at Ser354. Residues 358–368 (SEEHLAPETKT) are compositionally biased toward basic and acidic residues. Ser419 carries the post-translational modification Phosphoserine. Thr439 carries the post-translational modification Phosphothreonine. The segment at 463–617 (SEDKGSWESQ…PAKKKKTPLK (155 aa)) is disordered. Positions 481–498 (KIGKKPVAKMPLRRPKMK) are enriched in basic residues. The region spanning 508-596 (PASPPRSPTE…SPASFEIPAS (89 aa)) is the SPAZ domain. 2 positions are modified to phosphoserine: Ser510 and Ser514. Thr516 carries the post-translational modification Phosphothreonine. The span at 541–561 (NPFSSTSKMQESPKLSQQSYN) shows a compositional bias: polar residues. 5 positions are modified to phosphoserine: Ser552, Ser582, Ser585, Ser587, and Ser596. Low complexity predominate over residues 575–590 (KASSKTPSSPSKSPAS). Phosphothreonine is present on residues Thr632, Thr653, and Thr657. Disordered stretches follow at residues 636-665 (KKSP…SAIS) and 696-719 (DFPQ…SEEL). Residues 652–665 (PTPAATPEAPSAIS) are compositionally biased toward low complexity. Residues 701–716 (SDLSNFVNETKFNSPS) show a composition bias toward polar residues. A phosphoserine mark is found at Ser714 and Ser736. Thr755 is subject to Phosphothreonine. The tract at residues 756–780 (PQESPVKSPPVRMSDSPTPCSGSSF) is disordered. Residues Ser759 and Ser771 each carry the phosphoserine modification. A compositionally biased stretch (polar residues) spans 770–780 (DSPTPCSGSSF). 2 coiled-coil regions span residues 877 to 905 (AQKL…LASR) and 948 to 1148 (DLDS…KMGK).

It belongs to the TACC family. Interacts with microtubules. Interacts with YEATS4, GCN5L2 and PCAF. Interacts with CCDC100/CEP120. Post-translationally, phosphorylated; which is required for localization in centrosome. In terms of tissue distribution, expressed in brain, kidney, lung, thymus and ovary. Not detectable in normal tissues at protein level.

The protein resides in the cytoplasm. Its subcellular location is the nucleus. The protein localises to the cytoskeleton. It localises to the microtubule organizing center. It is found in the centrosome. In terms of biological role, plays a role in the microtubule-dependent coupling of the nucleus and the centrosome. Involved in the processes that regulate centrosome-mediated interkinetic nuclear migration (INM) of neural progenitors. May play a role in organizing centrosomal microtubules. The protein is Transforming acidic coiled-coil-containing protein 2 (Tacc2) of Mus musculus (Mouse).